The primary structure comprises 559 residues: MRRLSSWRKMATAEKQKHDGRVKIGHYILGDTLGVGTFGKVKVGKHELTGHKVAVKILNRQKIRSLDVVGKIRREIQNLKLFRHPHIIKLYQVISTPSDIFMVMEYVSGGELFDYICKNGRLDEKESRRLFQQILSGVDYCHRHMVVHRDLKPENVLLDAHMNAKIADFGLSNMMSDGEFLRTSCGSPNYAAPEVISGRLYAGPEVDIWSSGVILYALLCGTLPFDDDHVPTLFKKICDGIFYTPQYLNPSVISLLKHMLQVDPMKRATIKDIREHEWFKQDLPKYLFPEDPSYSSTMIDDEALKEVCEKFECSEEEVLSCLYNRNHQDPLAVAYHLIIDNRRIMNEAKDFYLATSPPDSFLDDHHLTRPHPERVPFLVAETPRARHTLDELNPQKSKHQGVRKAKWHLGIRSQSRPNDIMAEVCRAIKQLDYEWKVVNPYYLRVRRKNPVTSTYSKMSLQLYQVDSRTYLLDFRSIDDEITEAKSGTATPQRSGSVSNYRSCQRSDSDAEAQGKSSEVSLTSSVTSLDSSPVDLTPRPGSHTIEFFEMCANLIKILAQ.

The 253-residue stretch at 27 to 279 (YILGDTLGVG…IKDIREHEWF (253 aa)) folds into the Protein kinase domain. Thr-32 carries the post-translational modification Phosphothreonine. ATP is bound by residues 33–41 (LGVGTFGKV) and Lys-56. The active-site Proton acceptor is Asp-150. Thr-183 carries the post-translational modification Phosphothreonine; by LKB1 and CaMKK2. 2 positions are modified to phosphothreonine: Thr-269 and Thr-355. The segment at 302-381 (EALKEVCEKF…PERVPFLVAE (80 aa)) is AIS. At Ser-356 the chain carries Phosphoserine. Residue Ser-360 is modified to Phosphoserine; by ULK1. At Thr-368 the chain carries Phosphothreonine; by ULK1. Residue Thr-382 is modified to Phosphothreonine. Residues Ser-397, Ser-467, and Ser-486 each carry the phosphoserine modification. The segment covering 485-505 (KSGTATPQRSGSVSNYRSCQR) has biased composition (polar residues). The segment at 485-536 (KSGTATPQRSGSVSNYRSCQRSDSDAEAQGKSSEVSLTSSVTSLDSSPVDLT) is disordered. Phosphothreonine occurs at positions 488 and 490. Residues Ser-496, Ser-508, Ser-524, and Ser-527 each carry the phosphoserine modification. Residues 516-535 (SSEVSLTSSVTSLDSSPVDL) are compositionally biased toward low complexity.

Belongs to the protein kinase superfamily. CAMK Ser/Thr protein kinase family. SNF1 subfamily. AMPK is a heterotrimer of an alpha catalytic subunit (PRKAA1 or PRKAA2), a beta (PRKAB1 or PRKAB2) and a gamma non-catalytic subunits (PRKAG1, PRKAG2 or PRKAG3). Interacts with FNIP1 and FNIP2. In terms of assembly, (Microbial infection) Interacts with Dengue type 2 virus non-structural protein 1; this interaction promotes the AMPK/ERK/mTOR signaling pathway to induce autophagy. Mg(2+) serves as cofactor. Post-translationally, ubiquitinated. In terms of processing, phosphorylated at Thr-183 by STK11/LKB1 in complex with STE20-related adapter-alpha (STRADA) pseudo kinase and CAB39. Also phosphorylated at Thr-183 by CAMKK2; triggered by a rise in intracellular calcium ions, without detectable changes in the AMP/ATP ratio. CAMKK1 can also phosphorylate Thr-183, but at a much lower level. Dephosphorylated by protein phosphatase 2A and 2C (PP2A and PP2C). Phosphorylated by ULK1 and ULK2; leading to negatively regulate AMPK activity and suggesting the existence of a regulatory feedback loop between ULK1, ULK2 and AMPK. Dephosphorylated by PPM1A and PPM1B. Glycosylated; O-GlcNAcylated by OGT, promoting the AMP-activated protein kinase (AMPK) activity.

It localises to the cytoplasm. Its subcellular location is the nucleus. It catalyses the reaction L-seryl-[protein] + ATP = O-phospho-L-seryl-[protein] + ADP + H(+). The enzyme catalyses L-threonyl-[protein] + ATP = O-phospho-L-threonyl-[protein] + ADP + H(+). It carries out the reaction L-seryl-[acetyl-CoA carboxylase] + ATP = O-phospho-L-seryl-[acetyl-CoA carboxylase] + ADP + H(+). The catalysed reaction is L-seryl-[3-hydroxy-3-methylglutaryl-coenzyme A reductase] + ATP = O-phospho-L-seryl-[3-hydroxy-3-methylglutaryl-coenzyme A reductase] + ADP + H(+). It catalyses the reaction L-seryl-[tau protein] + ATP = O-phospho-L-seryl-[tau protein] + ADP + H(+). The enzyme catalyses L-threonyl-[tau protein] + ATP = O-phospho-L-threonyl-[tau protein] + ADP + H(+). Its activity is regulated as follows. Activated by phosphorylation on Thr-183. Binding of AMP to non-catalytic gamma subunit (PRKAG1, PRKAG2 or PRKAG3) results in allosteric activation, inducing phosphorylation on Thr-183. AMP-binding to gamma subunit also sustains activity by preventing dephosphorylation of Thr-183. ADP also stimulates Thr-183 phosphorylation, without stimulating already phosphorylated AMPK. ATP promotes dephosphorylation of Thr-183, rendering the enzyme inactive. Under physiological conditions AMPK mainly exists in its inactive form in complex with ATP, which is much more abundant than AMP. AMPK is activated by antihyperglycemic drug metformin, a drug prescribed to patients with type 2 diabetes: in vivo, metformin seems to mainly inhibit liver gluconeogenesis. However, metformin can be used to activate AMPK in muscle and other cells in culture or ex vivo. Selectively inhibited by compound C (6-[4-(2-Piperidin-1-yl-ethoxy)-phenyl)]-3-pyridin-4-yl-pyyrazolo[1,5-a] pyrimidine. Activated by resveratrol, a natural polyphenol present in red wine, and S17834, a synthetic polyphenol. In terms of biological role, catalytic subunit of AMP-activated protein kinase (AMPK), an energy sensor protein kinase that plays a key role in regulating cellular energy metabolism. In response to reduction of intracellular ATP levels, AMPK activates energy-producing pathways and inhibits energy-consuming processes: inhibits protein, carbohydrate and lipid biosynthesis, as well as cell growth and proliferation. AMPK acts via direct phosphorylation of metabolic enzymes, and by longer-term effects via phosphorylation of transcription regulators. Regulates lipid synthesis by phosphorylating and inactivating lipid metabolic enzymes such as ACACA, ACACB, GYS1, HMGCR and LIPE; regulates fatty acid and cholesterol synthesis by phosphorylating acetyl-CoA carboxylase (ACACA and ACACB) and hormone-sensitive lipase (LIPE) enzymes, respectively. Promotes lipolysis of lipid droplets by mediating phosphorylation of isoform 1 of CHKA (CHKalpha2). Regulates insulin-signaling and glycolysis by phosphorylating IRS1, PFKFB2 and PFKFB3. AMPK stimulates glucose uptake in muscle by increasing the translocation of the glucose transporter SLC2A4/GLUT4 to the plasma membrane, possibly by mediating phosphorylation of TBC1D4/AS160. Regulates transcription and chromatin structure by phosphorylating transcription regulators involved in energy metabolism such as CRTC2/TORC2, FOXO3, histone H2B, HDAC5, MEF2C, MLXIPL/ChREBP, EP300, HNF4A, p53/TP53, SREBF1, SREBF2 and PPARGC1A. Acts as a key regulator of glucose homeostasis in liver by phosphorylating CRTC2/TORC2, leading to CRTC2/TORC2 sequestration in the cytoplasm. In response to stress, phosphorylates 'Ser-36' of histone H2B (H2BS36ph), leading to promote transcription. Acts as a key regulator of cell growth and proliferation by phosphorylating FNIP1, TSC2, RPTOR, WDR24 and ATG1/ULK1: in response to nutrient limitation, negatively regulates the mTORC1 complex by phosphorylating RPTOR component of the mTORC1 complex and by phosphorylating and activating TSC2. Also phosphorylates and inhibits GATOR2 subunit WDR24 in response to nutrient limitation, leading to suppress glucose-mediated mTORC1 activation. In response to energetic stress, phosphorylates FNIP1, inactivating the non-canonical mTORC1 signaling, thereby promoting nuclear translocation of TFEB and TFE3, and inducing transcription of lysosomal or autophagy genes. In response to nutrient limitation, promotes autophagy by phosphorylating and activating ATG1/ULK1. In that process, it also activates WDR45/WIPI4. Phosphorylates CASP6, thereby preventing its autoprocessing and subsequent activation. In response to nutrient limitation, phosphorylates transcription factor FOXO3 promoting FOXO3 mitochondrial import. Also acts as a regulator of cellular polarity by remodeling the actin cytoskeleton; probably by indirectly activating myosin. AMPK also acts as a regulator of circadian rhythm by mediating phosphorylation of CRY1, leading to destabilize it. May regulate the Wnt signaling pathway by phosphorylating CTNNB1, leading to stabilize it. Also has tau-protein kinase activity: in response to amyloid beta A4 protein (APP) exposure, activated by CAMKK2, leading to phosphorylation of MAPT/TAU; however the relevance of such data remains unclear in vivo. Also phosphorylates CFTR, EEF2K, KLC1, NOS3 and SLC12A1. Regulates hepatic lipogenesis. Activated via SIRT3, represses sterol regulatory element-binding protein (SREBP) transcriptional activities and ATP-consuming lipogenesis to restore cellular energy balance. Upon stress, regulates mitochondrial fragmentation through phosphorylation of MTFR1L. The protein is 5'-AMP-activated protein kinase catalytic subunit alpha-1 of Homo sapiens (Human).